The following is a 152-amino-acid chain: Small ribosomal subunit protein uS11B (152 aa).

Residues 131 to 152 (EDVTPIPSDSTRRKGGRRGRRL) form a disordered region. A compositionally biased stretch (basic residues) spans 143–152 (RKGGRRGRRL).

Belongs to the universal ribosomal protein uS11 family.

In Anopheles gambiae (African malaria mosquito), this protein is Small ribosomal subunit protein uS11B.